The sequence spans 199 residues: ATP-dependent Clp protease proteolytic subunit (199 aa).

Serine 99 acts as the Nucleophile in catalysis. The active site involves histidine 124.

It belongs to the peptidase S14 family. As to quaternary structure, fourteen ClpP subunits assemble into 2 heptameric rings which stack back to back to give a disk-like structure with a central cavity, resembling the structure of eukaryotic proteasomes.

The protein resides in the cytoplasm. It catalyses the reaction Hydrolysis of proteins to small peptides in the presence of ATP and magnesium. alpha-casein is the usual test substrate. In the absence of ATP, only oligopeptides shorter than five residues are hydrolyzed (such as succinyl-Leu-Tyr-|-NHMec, and Leu-Tyr-Leu-|-Tyr-Trp, in which cleavage of the -Tyr-|-Leu- and -Tyr-|-Trp bonds also occurs).. Its function is as follows. Cleaves peptides in various proteins in a process that requires ATP hydrolysis. Has a chymotrypsin-like activity. Plays a major role in the degradation of misfolded proteins. This is ATP-dependent Clp protease proteolytic subunit from Lactococcus lactis subsp. lactis (strain IL1403) (Streptococcus lactis).